The primary structure comprises 138 residues: Translation initiation factor 2 subunit beta (138 aa).

This sequence belongs to the eIF-2-beta/eIF-5 family. As to quaternary structure, heterotrimer composed of an alpha, a beta and a gamma chain.

Its function is as follows. eIF-2 functions in the early steps of protein synthesis by forming a ternary complex with GTP and initiator tRNA. In Methanococcus maripaludis (strain C5 / ATCC BAA-1333), this protein is Translation initiation factor 2 subunit beta.